Here is a 1396-residue protein sequence, read N- to C-terminus: DNA-directed RNA polymerase subunit beta' (1396 aa).

Zn(2+) contacts are provided by cysteine 72, cysteine 74, cysteine 87, and cysteine 90. Aspartate 463, aspartate 465, and aspartate 467 together coordinate Mg(2+). Zn(2+)-binding residues include cysteine 814, cysteine 889, cysteine 896, and cysteine 899.

The protein belongs to the RNA polymerase beta' chain family. As to quaternary structure, the RNAP catalytic core consists of 2 alpha, 1 beta, 1 beta' and 1 omega subunit. When a sigma factor is associated with the core the holoenzyme is formed, which can initiate transcription. Mg(2+) serves as cofactor. The cofactor is Zn(2+).

It carries out the reaction RNA(n) + a ribonucleoside 5'-triphosphate = RNA(n+1) + diphosphate. Its function is as follows. DNA-dependent RNA polymerase catalyzes the transcription of DNA into RNA using the four ribonucleoside triphosphates as substrates. In Chlamydia trachomatis serovar A (strain ATCC VR-571B / DSM 19440 / HAR-13), this protein is DNA-directed RNA polymerase subunit beta'.